Here is a 196-residue protein sequence, read N- to C-terminus: Large ribosomal subunit protein uL18 (196 aa).

Belongs to the universal ribosomal protein uL18 family. Part of the 50S ribosomal subunit. Contacts the 5S and 23S rRNAs.

This is one of the proteins that bind and probably mediate the attachment of the 5S RNA into the large ribosomal subunit, where it forms part of the central protuberance. The chain is Large ribosomal subunit protein uL18 from Saccharolobus islandicus (strain Y.N.15.51 / Yellowstone #2) (Sulfolobus islandicus).